The primary structure comprises 1040 residues: DNA mismatch repair protein MutS (1040 aa).

Over residues 1-10 the composition is skewed to polar residues; it reads MPVKPSAQNN. Disordered regions lie at residues 1-22 and 130-157; these read MPVKPSAQNNSPSKPTSKSVPV and ATGTDNANNPSNAPTMGDKQKKDKSKST. A compositionally biased stretch (low complexity) spans 11–22; the sequence is SPSKPTSKSVPV. Over residues 130–143 the composition is skewed to polar residues; the sequence is ATGTDNANNPSNAP. An ATP-binding site is contributed by 759 to 766; the sequence is GPNMGGKS.

This sequence belongs to the DNA mismatch repair MutS family.

In terms of biological role, this protein is involved in the repair of mismatches in DNA. It is possible that it carries out the mismatch recognition step. This protein has a weak ATPase activity. This chain is DNA mismatch repair protein MutS, found in Psychrobacter cryohalolentis (strain ATCC BAA-1226 / DSM 17306 / VKM B-2378 / K5).